Here is an 81-residue protein sequence, read N- to C-terminus: Photosystem I iron-sulfur center (81 aa).

4Fe-4S ferredoxin-type domains are found at residues 2 to 31 (SHAV…MVPW) and 37 to 68 (GQIA…IRVY). Residues Cys11, Cys14, Cys17, Cys21, Cys48, Cys51, Cys54, and Cys58 each contribute to the [4Fe-4S] cluster site.

In terms of assembly, the cyanobacterial PSI reaction center is composed of one copy each of PsaA,B,C,D,E,F,I,J,K,L,M and X, and forms trimeric complexes. [4Fe-4S] cluster serves as cofactor.

The protein resides in the cellular thylakoid membrane. The catalysed reaction is reduced [plastocyanin] + hnu + oxidized [2Fe-2S]-[ferredoxin] = oxidized [plastocyanin] + reduced [2Fe-2S]-[ferredoxin]. In terms of biological role, apoprotein for the two 4Fe-4S centers FA and FB of photosystem I (PSI); essential for photochemical activity. FB is the terminal electron acceptor of PSI, donating electrons to ferredoxin. The C-terminus interacts with PsaA/B/D and helps assemble the protein into the PSI complex. Required for binding of PsaD and PsaE to PSI. PSI is a plastocyanin/cytochrome c6-ferredoxin oxidoreductase, converting photonic excitation into a charge separation, which transfers an electron from the donor P700 chlorophyll pair to the spectroscopically characterized acceptors A0, A1, FX, FA and FB in turn. This is Photosystem I iron-sulfur center from Synechococcus sp. (strain WH8103).